Here is a 1120-residue protein sequence, read N- to C-terminus: ISWI chromatin-remodeling complex ATPase ISW2 (1120 aa).

Residues 1 to 16 (MTTQQEEQRSDTKNSK) are compositionally biased toward basic and acidic residues. Disordered regions lie at residues 1-58 (MTTQ…VEDR) and 129-153 (LSKS…EDAE). A phosphoserine mark is found at serine 17 and serine 19. Positions 47–58 (LSDKEIYTVEDR) are enriched in basic and acidic residues. Residues 196–361 (ISLHENKLSG…WALLNFLLPD (166 aa)) enclose the Helicase ATP-binding domain. 209–216 (DEMGLGKT) contributes to the ATP binding site. Residues 312–315 (DEAH) carry the DEAH box motif. Residues 494-645 (ILDKLLKRLK…QLVIQQGTGK (152 aa)) enclose the Helicase C-terminal domain. Disordered regions lie at residues 764–783 (GGGS…PRAP) and 828–853 (NEGS…KGHE). Serine 831 is modified (phosphoserine). The region spanning 886–938 (KAFTNWNKRDFMAFINACAKYGRDDMENIKKSIDSKTPEEVEVYAKIFWERLK) is the SANT domain. Residues 1062 to 1120 (PDANKKKRSRTSATREDTPLSQNESTRASTVPNLPTTMVTNQKDTNDHVDKRTKIDQEA) form a disordered region. The residue at position 1079 (threonine 1079) is a Phosphothreonine. The segment covering 1080-1104 (PLSQNESTRASTVPNLPTTMVTNQK) has biased composition (polar residues). A Phosphoserine modification is found at serine 1082. Residues 1105–1120 (DTNDHVDKRTKIDQEA) show a composition bias toward basic and acidic residues.

It belongs to the SNF2/RAD54 helicase family. ISWI subfamily. In terms of assembly, component of the ISW2 complex, which at least consists of ISW2, ITC1, DLS1 and DPB4. May form a stable subcomplex with ITC1.

It is found in the nucleus. In terms of biological role, catalytic component of the ISW2 complex, which acts in remodeling the chromatin by catalyzing an ATP-dependent alteration in the structure of nucleosomal DNA. The ISW2 complex is involved in coordinating transcriptional repression and in inheritance of telomeric silencing. It is involved in repression of MAT a-specific genes, INO1, and early meiotic genes during mitotic growth dependent upon transcription factor UME6 and in a parallel pathway to the RPD3-SIN3 histone deacetylase complex. This is ISWI chromatin-remodeling complex ATPase ISW2 (ISW2) from Saccharomyces cerevisiae (strain ATCC 204508 / S288c) (Baker's yeast).